The following is a 553-amino-acid chain: Putative transport protein KPN78578_40470 (553 aa).

The next 5 membrane-spanning stretches (helical) occupy residues 4-24, 28-48, 65-85, 95-115, and 158-178; these read IALT…IGNV, GVGF…HFVD, FGLI…FFAS, LFAI…HKLF, and MSYA…MWLV. RCK C-terminal domains lie at 192 to 276 and 279 to 361; these read RFEE…VIGQ and ATSL…ELGN. 6 consecutive transmembrane segments (helical) span residues 371–391, 403–425, 437–457, 464–484, 493–513, and 532–552; these read MLPV…PLFI, AGGP…LYWF, LGIV…FVAT, LSWI…VGVL, YLTL…LAFA, and PLVM…FWGL.

The protein belongs to the AAE transporter (TC 2.A.81) family. YidE subfamily.

The protein localises to the cell membrane. The polypeptide is Putative transport protein KPN78578_40470 (Klebsiella pneumoniae subsp. pneumoniae (strain ATCC 700721 / MGH 78578)).